Consider the following 175-residue polypeptide: Phosphopantetheine adenylyltransferase (175 aa).

Ser10 contributes to the substrate binding site. Residues 10–11 and His18 each bind ATP; that span reads SF. Positions 42, 74, and 88 each coordinate substrate. Residues 89-91, Glu99, and 124-130 each bind ATP; these read GMR and WIFTSSS.

The protein belongs to the bacterial CoaD family. As to quaternary structure, homohexamer. The cofactor is Mg(2+).

It localises to the cytoplasm. The enzyme catalyses (R)-4'-phosphopantetheine + ATP + H(+) = 3'-dephospho-CoA + diphosphate. Its pathway is cofactor biosynthesis; coenzyme A biosynthesis; CoA from (R)-pantothenate: step 4/5. In terms of biological role, reversibly transfers an adenylyl group from ATP to 4'-phosphopantetheine, yielding dephospho-CoA (dPCoA) and pyrophosphate. The sequence is that of Phosphopantetheine adenylyltransferase from Desulfatibacillum aliphaticivorans.